Reading from the N-terminus, the 694-residue chain is Elongation factor G (694 aa).

The tr-type G domain occupies 9 to 288 (DAIRNIGIMA…VIVKWLPSPL (280 aa)). Residues 18-25 (AHIDAGKT), 82-86 (DTPGH), and 136-139 (NKMD) each bind GTP.

It belongs to the TRAFAC class translation factor GTPase superfamily. Classic translation factor GTPase family. EF-G/EF-2 subfamily.

It localises to the cytoplasm. In terms of biological role, catalyzes the GTP-dependent ribosomal translocation step during translation elongation. During this step, the ribosome changes from the pre-translocational (PRE) to the post-translocational (POST) state as the newly formed A-site-bound peptidyl-tRNA and P-site-bound deacylated tRNA move to the P and E sites, respectively. Catalyzes the coordinated movement of the two tRNA molecules, the mRNA and conformational changes in the ribosome. This chain is Elongation factor G, found in Chlamydia trachomatis serovar A (strain ATCC VR-571B / DSM 19440 / HAR-13).